Here is a 354-residue protein sequence, read N- to C-terminus: Probable dual-specificity RNA methyltransferase RlmN (354 aa).

Glu-94 (proton acceptor) is an active-site residue. The Radical SAM core domain maps to 103-332 (GRRRNTACLS…QEAGLEAAIR (230 aa)). Cys-110 and Cys-343 form a disulfide bridge. Residues Cys-117, Cys-121, and Cys-124 each contribute to the [4Fe-4S] cluster site. S-adenosyl-L-methionine is bound by residues 169 to 170 (GE), Ser-201, 224 to 226 (SLH), and Asn-300. The active-site S-methylcysteine intermediate is Cys-343.

This sequence belongs to the radical SAM superfamily. RlmN family. Requires [4Fe-4S] cluster as cofactor.

Its subcellular location is the cytoplasm. The catalysed reaction is adenosine(2503) in 23S rRNA + 2 reduced [2Fe-2S]-[ferredoxin] + 2 S-adenosyl-L-methionine = 2-methyladenosine(2503) in 23S rRNA + 5'-deoxyadenosine + L-methionine + 2 oxidized [2Fe-2S]-[ferredoxin] + S-adenosyl-L-homocysteine. It carries out the reaction adenosine(37) in tRNA + 2 reduced [2Fe-2S]-[ferredoxin] + 2 S-adenosyl-L-methionine = 2-methyladenosine(37) in tRNA + 5'-deoxyadenosine + L-methionine + 2 oxidized [2Fe-2S]-[ferredoxin] + S-adenosyl-L-homocysteine. Its function is as follows. Specifically methylates position 2 of adenine 2503 in 23S rRNA and position 2 of adenine 37 in tRNAs. This chain is Probable dual-specificity RNA methyltransferase RlmN, found in Moorella thermoacetica (strain ATCC 39073 / JCM 9320).